The chain runs to 935 residues: Protein HIRA (935 aa).

WD repeat units lie at residues 14–58 (HDTG…DKKK), 72–111 (ESQSQSNSCRWSPDGKRFAFGSDDSSVSVWEYVGLINSMG), 131–170 (GHSMEVLTVEWSPNGKYLASGSIDYRIIIYNARKLPDRIT), 174–213 (DIQLPVKGLSWDPIGKYLASLEGDKKLRFWATDSWQCVKS), 222–261 (IEETMLTRLDWSPDGKYLMTPAAVRSGKPLIKLIQRQTWK), 277–320 (RAMP…KPLF), and 325–362 (IFNHTVMDFAWCGRNLLACSQDGTVKVIHLSESVIGEM). The disordered stretch occupies residues 431 to 556 (SSDIQLTKSM…RNKKRKVPAT (126 aa)). A compositionally biased stretch (basic and acidic residues) spans 439-468 (SMEDNSKENESKNSEKTMMEERNKQIDVRK). Positions 480 to 492 (GTTTADPMTSLSS) are enriched in polar residues. Over residues 520–542 (DLEDSSDSDDDDEEEEEDMEISD) the composition is skewed to acidic residues.

This sequence belongs to the WD repeat HIR1 family.

Its subcellular location is the nucleus. In terms of biological role, required for replication-independent chromatin assembly and for the periodic repression of histone gene transcription during the cell cycle. The protein is Protein HIRA of Caenorhabditis elegans.